The chain runs to 331 residues: Pantothenate kinase (331 aa).

109-116 (GSVAVGKS) serves as a coordination point for ATP.

The protein belongs to the prokaryotic pantothenate kinase family.

The protein resides in the cytoplasm. The enzyme catalyses (R)-pantothenate + ATP = (R)-4'-phosphopantothenate + ADP + H(+). It participates in cofactor biosynthesis; coenzyme A biosynthesis; CoA from (R)-pantothenate: step 1/5. In Rhizobium leguminosarum bv. trifolii (strain WSM2304), this protein is Pantothenate kinase.